A 166-amino-acid chain; its full sequence is Putative membrane protein 164 (166 aa).

Over 1-4 the chain is Intravirion; that stretch reads MYHP. Residues 5-25 form a helical membrane-spanning segment; sequence VVQVLIGLILVIILILGFYHL. At 26 to 166 the chain is on the virion surface side; the sequence is KKKSCKTDTD…TIMGIARNIL (141 aa).

The protein belongs to the asfivirus envelope protein p22 family.

The protein resides in the virion membrane. The protein localises to the host cell membrane. This chain is Putative membrane protein 164, found in Ornithodoros (relapsing fever ticks).